The primary structure comprises 258 residues: Venom plasminogen activator LV-PA (258 aa).

Residues methionine 1–alanine 18 form the signal peptide. Residues glutamine 19–leucine 24 constitute a propeptide that is removed on maturation. One can recognise a Peptidase S1 domain in the interval valine 25 to alanine 249. Asparagine 44 is a glycosylation site (N-linked (GlcNAc...) asparagine). A disulfide bridge links cysteine 50 with cysteine 66. Residues histidine 65 and aspartate 110 each act as charge relay system in the active site. 3 disulfides stabilise this stretch: cysteine 142/cysteine 210, cysteine 174/cysteine 189, and cysteine 200/cysteine 225. Serine 204 functions as the Charge relay system in the catalytic mechanism.

This sequence belongs to the peptidase S1 family. Snake venom subfamily. As to quaternary structure, monomer. In terms of processing, N-glycosylated. PubMed:17034951 shows that it contains approximately 10% carbohydrates, PubMed:10871053 shows that it contains approximately 20% carbohydrates. Expressed by the venom gland.

The protein localises to the secreted. Its activity is regulated as follows. Inhibited by the serine protease inhibitors NPGB, PMSF, p-aminobenzamidine and aprotinin. Not inhibited by soybean trypsin inhibitor or EDTA. Functionally, snake venom serine protease that activates plasminogen. Weakly hydrolyzes the alpha chain of human fibrinogen without releasing fibrinopeptide A. Does not hydrolyze plasma kallikrein or factor Xa. Does not clot fibrinogen. Does not affect platelet function. Induces hypotensive effects on rats. Shows a preferential cleavage at Lys-|-Xaa over Arg-|-Xaa bonds. The protein is Venom plasminogen activator LV-PA of Lachesis muta muta (Bushmaster).